Reading from the N-terminus, the 112-residue chain is Large ribosomal subunit protein eL31 (112 aa).

Belongs to the eukaryotic ribosomal protein eL31 family. In terms of assembly, component of the large ribosomal subunit. Mature ribosomes consist of a small (40S) and a large (60S) subunit. The 40S subunit contains about 32 different proteins and 1 molecule of RNA (18S). The 60S subunit contains 45 different proteins and 3 molecules of RNA (25S, 5.8S and 5S).

Its subcellular location is the cytoplasm. Component of the ribosome, a large ribonucleoprotein complex responsible for the synthesis of proteins in the cell. The small ribosomal subunit (SSU) binds messenger RNAs (mRNAs) and translates the encoded message by selecting cognate aminoacyl-transfer RNA (tRNA) molecules. The large subunit (LSU) contains the ribosomal catalytic site termed the peptidyl transferase center (PTC), which catalyzes the formation of peptide bonds, thereby polymerizing the amino acids delivered by tRNAs into a polypeptide chain. The nascent polypeptides leave the ribosome through a tunnel in the LSU and interact with protein factors that function in enzymatic processing, targeting, and the membrane insertion of nascent chains at the exit of the ribosomal tunnel. The chain is Large ribosomal subunit protein eL31 from Candida albicans (strain SC5314 / ATCC MYA-2876) (Yeast).